The chain runs to 447 residues: Oxysterols receptor LXR-alpha (447 aa).

Residues 1-88 (MSLWLEAPVP…LRPQKRKKGP (88 aa)) form a disordered region. Positions 1–96 (MSLWLEAPVP…GPAPKMLGNE (96 aa)) are transactivation AF-1; required for ligand-independent transactivation function. Positions 95 to 170 (NELCSVCGDK…AGMREECVLS (76 aa)) form a DNA-binding region, nuclear receptor. NR C4-type zinc fingers lie at residues 98-118 (CSVCGDKASGFHYNVLSCEGC) and 134-158 (CHSGGHCPMDTYMRRKCQECRLRKC). The segment at 178-203 (KMKRQEEEQAQATSAPPRASSPPQVL) is disordered. Low complexity predominate over residues 187 to 203 (AQATSAPPRASSPPQVL). The segment at 205–447 (QLSPEQLGMI…LLSEIWDVHE (243 aa)) is transactivation AF-2; required for ligand-dependent transactivation function; mediates interaction with CCAR2. The 239-residue stretch at 209–447 (EQLGMIEKLV…LLSEIWDVHE (239 aa)) folds into the NR LBD domain.

The protein belongs to the nuclear hormone receptor family. NR1 subfamily. As to quaternary structure, heterodimer of NR1H3 and RXR (retinoic acid receptor). Interacts with CCAR2 (via N-terminus) in a ligand-independent manner. Interacts with SIRT1 and this interaction is inhibited by CCAR2. In terms of processing, ubiquitinated by UBR5, leading to its degradation: UBR5 specifically recognizes and binds ligand-bound NR1H3 when it is not associated with coactivators (NCOAs). In presence of NCOAs, the UBR5-degron is not accessible, preventing its ubiquitination and degradation.

It localises to the nucleus. It is found in the cytoplasm. Nuclear receptor that exhibits a ligand-dependent transcriptional activation activity. Interaction with retinoic acid receptor (RXR) shifts RXR from its role as a silent DNA-binding partner to an active ligand-binding subunit in mediating retinoid responses through target genes defined by LXRES. LXRES are DR4-type response elements characterized by direct repeats of two similar hexanuclotide half-sites spaced by four nucleotides. Plays an important role in the regulation of cholesterol homeostasis, regulating cholesterol uptake through MYLIP-dependent ubiquitination of LDLR, VLDLR and LRP8. Interplays functionally with RORA for the regulation of genes involved in liver metabolism. Induces LPCAT3-dependent phospholipid remodeling in endoplasmic reticulum (ER) membranes of hepatocytes, driving SREBF1 processing and lipogenesis. Via LPCAT3, triggers the incorporation of arachidonate into phosphatidylcholines of ER membranes, increasing membrane dynamics and enabling triacylglycerols transfer to nascent very low-density lipoprotein (VLDL) particles. Via LPCAT3 also counteracts lipid-induced ER stress response and inflammation, likely by modulating SRC kinase membrane compartmentalization and limiting the synthesis of lipid inflammatory mediators. This is Oxysterols receptor LXR-alpha (NR1H3) from Bos taurus (Bovine).